The sequence spans 232 residues: Large ribosomal subunit protein uL1 (232 aa).

This sequence belongs to the universal ribosomal protein uL1 family. In terms of assembly, part of the 50S ribosomal subunit.

In terms of biological role, binds directly to 23S rRNA. The L1 stalk is quite mobile in the ribosome, and is involved in E site tRNA release. Functionally, protein L1 is also a translational repressor protein, it controls the translation of the L11 operon by binding to its mRNA. The protein is Large ribosomal subunit protein uL1 of Marinobacter nauticus (strain ATCC 700491 / DSM 11845 / VT8) (Marinobacter aquaeolei).